The following is a 176-amino-acid chain: NAD(P)H-quinone oxidoreductase subunit I, chloroplastic (176 aa).

4Fe-4S ferredoxin-type domains follow at residues 55 to 84 and 95 to 124; these read GRIH…VDWE and LNYS…MTEE. [4Fe-4S] cluster contacts are provided by cysteine 64, cysteine 67, cysteine 70, cysteine 74, cysteine 104, cysteine 107, cysteine 110, and cysteine 114.

It belongs to the complex I 23 kDa subunit family. As to quaternary structure, NDH is composed of at least 16 different subunits, 5 of which are encoded in the nucleus. Requires [4Fe-4S] cluster as cofactor.

The protein resides in the plastid. The protein localises to the chloroplast thylakoid membrane. The catalysed reaction is a plastoquinone + NADH + (n+1) H(+)(in) = a plastoquinol + NAD(+) + n H(+)(out). It catalyses the reaction a plastoquinone + NADPH + (n+1) H(+)(in) = a plastoquinol + NADP(+) + n H(+)(out). NDH shuttles electrons from NAD(P)H:plastoquinone, via FMN and iron-sulfur (Fe-S) centers, to quinones in the photosynthetic chain and possibly in a chloroplast respiratory chain. The immediate electron acceptor for the enzyme in this species is believed to be plastoquinone. Couples the redox reaction to proton translocation, and thus conserves the redox energy in a proton gradient. This is NAD(P)H-quinone oxidoreductase subunit I, chloroplastic from Populus trichocarpa (Western balsam poplar).